Here is a 356-residue protein sequence, read N- to C-terminus: Phospho-N-acetylmuramoyl-pentapeptide-transferase (356 aa).

10 consecutive transmembrane segments (helical) span residues 25–45 (TIAAMLTSGLIVFLFGPSIIA), 70–90 (GTPTMGGLMILTGIVVSAFLW), 93–113 (LSNIYFWVSLLVMLSFGAIGF), 138–158 (FFVAAIAAFIILQIGSSGFAL), 164–184 (YLIHLGWFFIPFSAFVIVATG), 195–215 (GLAIVPVMVAALSFALIAYLC), 235–255 (LAVLLGAVVGAGLGFLWFNAP), 258–278 (AIFMGDTGSLALGGLLGTVAV), 284–304 (IVLVLIGGLFVVEAFSVVIQV), and 333–353 (QVVIRFWIISIVLALIGLSTL).

Belongs to the glycosyltransferase 4 family. MraY subfamily. Mg(2+) serves as cofactor.

It localises to the cell inner membrane. The enzyme catalyses UDP-N-acetyl-alpha-D-muramoyl-L-alanyl-gamma-D-glutamyl-meso-2,6-diaminopimeloyl-D-alanyl-D-alanine + di-trans,octa-cis-undecaprenyl phosphate = di-trans,octa-cis-undecaprenyl diphospho-N-acetyl-alpha-D-muramoyl-L-alanyl-D-glutamyl-meso-2,6-diaminopimeloyl-D-alanyl-D-alanine + UMP. It functions in the pathway cell wall biogenesis; peptidoglycan biosynthesis. Its function is as follows. Catalyzes the initial step of the lipid cycle reactions in the biosynthesis of the cell wall peptidoglycan: transfers peptidoglycan precursor phospho-MurNAc-pentapeptide from UDP-MurNAc-pentapeptide onto the lipid carrier undecaprenyl phosphate, yielding undecaprenyl-pyrophosphoryl-MurNAc-pentapeptide, known as lipid I. This Bartonella tribocorum (strain CIP 105476 / IBS 506) protein is Phospho-N-acetylmuramoyl-pentapeptide-transferase.